Consider the following 572-residue polypeptide: Probable cysteine--tRNA ligase, mitochondrial (572 aa).

Residue cysteine 81 participates in Zn(2+) binding. Position 82 (glycine 82) interacts with L-cysteine. Positions 83–93 match the 'HIGH' region motif; it reads PTVYDHAHLGH. Threonine 122 lines the L-cysteine pocket. The short motif at 127 to 130 is the 'KIIK' region element; sequence KIIK. Zn(2+) contacts are provided by cysteine 260, histidine 285, and glutamate 289. An L-cysteine-binding site is contributed by histidine 285. Residues 320–324 carry the 'KMSKS' region motif; that stretch reads KMSKS. Residue lysine 323 participates in ATP binding.

This sequence belongs to the class-I aminoacyl-tRNA synthetase family. Zn(2+) is required as a cofactor.

The protein localises to the mitochondrion. The enzyme catalyses tRNA(Cys) + L-cysteine + ATP = L-cysteinyl-tRNA(Cys) + AMP + diphosphate. It carries out the reaction 2 L-cysteine = S-sulfanyl-L-cysteine + L-alanine. It catalyses the reaction S-sulfanyl-L-cysteine + L-cysteine = S-disulfanyl-L-cysteine + L-alanine. The catalysed reaction is S-sulfanyl-L-cysteine + tRNA(Cys) + ATP = (S)-sulfanyl-L-cysteinyl-tRNA(Cys) + AMP + diphosphate. The enzyme catalyses S-disulfanyl-L-cysteine + tRNA(Cys) + ATP = (S)-disulfanyl-L-cysteinyl-tRNA(Cys) + AMP + diphosphate. Mitochondrial cysteine-specific aminoacyl-tRNA synthetase that catalyzes the ATP-dependent ligation of cysteine to tRNA(Cys). In terms of biological role, in addition to its role as an aminoacyl-tRNA synthetase, has also cysteine persulfide synthase activity. Produces reactive persulfide species such as cysteine persulfide (CysSSH) from substrate cysteine and mediate direct incorporation of CysSSH into proteins during translations, resulting in protein persulfides and polysulfides. CysSSHs behave as potent antioxidants and cellular protectants. This Xenopus tropicalis (Western clawed frog) protein is Probable cysteine--tRNA ligase, mitochondrial (cars2).